The primary structure comprises 181 residues: Adenine phosphoribosyltransferase (181 aa).

It belongs to the purine/pyrimidine phosphoribosyltransferase family. As to quaternary structure, homodimer.

The protein resides in the cytoplasm. The catalysed reaction is AMP + diphosphate = 5-phospho-alpha-D-ribose 1-diphosphate + adenine. The protein operates within purine metabolism; AMP biosynthesis via salvage pathway; AMP from adenine: step 1/1. Its function is as follows. Catalyzes a salvage reaction resulting in the formation of AMP, that is energically less costly than de novo synthesis. The polypeptide is Adenine phosphoribosyltransferase (Aliivibrio fischeri (strain ATCC 700601 / ES114) (Vibrio fischeri)).